A 797-amino-acid polypeptide reads, in one-letter code: G-type lectin S-receptor-like serine/threonine-protein kinase SD2-2 (797 aa).

Residues 1 to 23 form the signal peptide; the sequence is MPCTTYLPLLLLLFLLPPPSVQS. The 116-residue stretch at 24–139 folds into the Bulb-type lectin domain; it reads KVIIKGNQTI…DGSPVWQSFD (116 aa). Residues 24–401 lie on the Extracellular side of the membrane; sequence KVIIKGNQTI…KNSKGNISKS (378 aa). Residues N30, N49, N150, and N197 are each glycosylated (N-linked (GlcNAc...) asparagine). Residues 274-310 enclose the EGF-like; atypical domain; sequence PEDPCRVYNLCGQLGFCSSELLKPCACIRGFRPRNDA. Disulfide bonds link C278–C290, C284–C298, C359–C381, and C363–C369. Residues 321-407 enclose the PAN domain; it reads CRRENGDSGE…ISKSIIILCS (87 aa). 2 N-linked (GlcNAc...) asparagine glycosylation sites follow: N366 and N397. A helical membrane pass occupies residues 402 to 422; sequence IIILCSVVGSISVLGFTLLVP. At 423-797 the chain is on the cytoplasmic side; that stretch reads LILLKRSRKR…SRSSFGRPSP (375 aa). One can recognise a Protein kinase domain in the interval 461 to 742; sequence NGFSDKVGHG…TVVKMLEGVV (282 aa). ATP-binding positions include 467 to 475 and K490; that span reads VGHGGFGAV. A caM-binding region spans residues 550–566; it reads SPKLLSWETRFRIALGT. D585 functions as the Proton acceptor in the catalytic mechanism. A disordered region spans residues 767–797; the sequence is GTSCSEGHGCSDLNTGLSSPGSRSSFGRPSP. The span at 784 to 797 shows a compositional bias: low complexity; that stretch reads SSPGSRSSFGRPSP.

Belongs to the protein kinase superfamily. Ser/Thr protein kinase family. In terms of processing, autophosphorylated. In terms of tissue distribution, expressed in the shoot apex and roots, specifically in lateral roots and at the root-hypocotyl transition zone.

The protein resides in the cell membrane. It catalyses the reaction L-seryl-[protein] + ATP = O-phospho-L-seryl-[protein] + ADP + H(+). The catalysed reaction is L-threonyl-[protein] + ATP = O-phospho-L-threonyl-[protein] + ADP + H(+). In terms of biological role, serine/threonine-protein kinase. The protein is G-type lectin S-receptor-like serine/threonine-protein kinase SD2-2 (SD22) of Arabidopsis thaliana (Mouse-ear cress).